A 467-amino-acid chain; its full sequence is ATP synthase subunit beta (467 aa).

156 to 163 provides a ligand contact to ATP; that stretch reads GGAGVGKT.

It belongs to the ATPase alpha/beta chains family. In terms of assembly, F-type ATPases have 2 components, CF(1) - the catalytic core - and CF(0) - the membrane proton channel. CF(1) has five subunits: alpha(3), beta(3), gamma(1), delta(1), epsilon(1). CF(0) has three main subunits: a(1), b(2) and c(9-12). The alpha and beta chains form an alternating ring which encloses part of the gamma chain. CF(1) is attached to CF(0) by a central stalk formed by the gamma and epsilon chains, while a peripheral stalk is formed by the delta and b chains.

Its subcellular location is the cell inner membrane. The enzyme catalyses ATP + H2O + 4 H(+)(in) = ADP + phosphate + 5 H(+)(out). In terms of biological role, produces ATP from ADP in the presence of a proton gradient across the membrane. The catalytic sites are hosted primarily by the beta subunits. In Cupriavidus metallidurans (strain ATCC 43123 / DSM 2839 / NBRC 102507 / CH34) (Ralstonia metallidurans), this protein is ATP synthase subunit beta.